A 274-amino-acid chain; its full sequence is 2,3,4,5-tetrahydropyridine-2,6-dicarboxylate N-succinyltransferase (274 aa).

It belongs to the transferase hexapeptide repeat family.

The protein resides in the cytoplasm. It carries out the reaction (S)-2,3,4,5-tetrahydrodipicolinate + succinyl-CoA + H2O = (S)-2-succinylamino-6-oxoheptanedioate + CoA. The protein operates within amino-acid biosynthesis; L-lysine biosynthesis via DAP pathway; LL-2,6-diaminopimelate from (S)-tetrahydrodipicolinate (succinylase route): step 1/3. This is 2,3,4,5-tetrahydropyridine-2,6-dicarboxylate N-succinyltransferase from Leptothrix cholodnii (strain ATCC 51168 / LMG 8142 / SP-6) (Leptothrix discophora (strain SP-6)).